The primary structure comprises 147 residues: Antiholin-like protein LrgA (147 aa).

Transmembrane regions (helical) follow at residues 12 to 32, 35 to 55, 74 to 94, and 98 to 118; these read PAHF…SKII, FMPI…VLLC, NIGL…GVIS, and FLII…TGYV.

The protein belongs to the CidA/LrgA family. LrgA subfamily.

Its subcellular location is the cell membrane. In terms of biological role, inhibits the expression or activity of extracellular murein hydrolases by interacting, possibly with LrgB, with the holin-like proteins CidA and/or CidB. The LrgAB and CidAB proteins may affect the proton motive force of the membrane. May be involved in programmed cell death (PCD), possibly triggering PCD in response to antibiotics and environmental stresses. The polypeptide is Antiholin-like protein LrgA (Staphylococcus aureus (strain USA300)).